Reading from the N-terminus, the 574-residue chain is Avenacosidase 1 (574 aa).

A chloroplast-targeting transit peptide spans 1–55 (MALLCSALSNSTHPSFRSHIGANSENLWHLSADPAQKSKRRCNLTLSSRAARISS). Residues Gln-88, His-192, and 237–238 (NE) each bind a beta-D-glucoside. Glu-238 (proton donor) is an active-site residue. Cysteines 258 and 264 form a disulfide. Residues Tyr-381, Glu-454, Trp-505, 512–513 (EW), and Phe-521 contribute to the a beta-D-glucoside site. Glu-454 functions as the Nucleophile in the catalytic mechanism.

It belongs to the glycosyl hydrolase 1 family. As to quaternary structure, homo- and heteromultimer with P60B in a 1:1 stoichiometry. Aggregates to form the fibrillar stromacentre. As to expression, expressed in caryopses, coleoptiles, primary leaves, and etiolated and green seedlings, but not in roots.

The protein localises to the plastid. The protein resides in the chloroplast stroma. It catalyses the reaction avenacoside B + H2O = 26-desgluco-avenacoside B + D-glucose. With respect to regulation, inhibited by N-(3-Dimethylaminopropyl)-N'-ethylcarbodiimide hydrochloride (EDC). Functionally, beta-glucosidase acting as a preformed defense system. Hydrolyzes the bisdesmosides avenacosides A and B to 26-desgluco-avenacosides exhibiting fungicidal activity. Can use beta-fucoside &gt; beta-glucoside &gt; beta-galactoside &gt; beta-xyloside as substrates, but not alpha-glycosides, beta-thioglucosides and disaccharides. In Avena sativa (Oat), this protein is Avenacosidase 1 (P60A).